The chain runs to 123 residues: Large ribosomal subunit protein eL8 (123 aa).

Belongs to the eukaryotic ribosomal protein eL8 family. As to quaternary structure, part of the 50S ribosomal subunit. Probably part of the RNase P complex.

It localises to the cytoplasm. Functionally, multifunctional RNA-binding protein that recognizes the K-turn motif in ribosomal RNA, the RNA component of RNase P, box H/ACA, box C/D and box C'/D' sRNAs. In Methanosphaera stadtmanae (strain ATCC 43021 / DSM 3091 / JCM 11832 / MCB-3), this protein is Large ribosomal subunit protein eL8.